The following is a 521-amino-acid chain: 56 kDa type-specific antigen (521 aa).

The signal sequence occupies residues 1–22 (MRKIMLIASAMSALSLPFSANA). A helical membrane pass occupies residues 64 to 86 (LPLIKGMPFGVTLAAGMTITPGV). The interval 386-415 (LGVDQGQEGGCSKDKKQSDTTAEESKKEGK) is disordered. The segment covering 396-415 (CSKDKKQSDTTAEESKKEGK) has biased composition (basic and acidic residues). A helical transmembrane segment spans residues 469–484 (TGMVGSLALGVAANVA).

It is found in the cell membrane. Its function is as follows. May be an adherent factor for rickettsial adsorption to the host-cell surface and a determinant of virulence of individual rickettsial strain. It is the major outer membrane protein. The sequence is that of 56 kDa type-specific antigen from Orientia tsutsugamushi (Rickettsia tsutsugamushi).